The following is a 583-amino-acid chain: Leucine-rich repeat-containing protein 47 (583 aa).

The residue at position 2 (Ala-2) is an N-acetylalanine. 7 LRR repeats span residues 76–95, 100–121, 130–152, 154–175, 180–202, 203–225, and 226–246; these read QLHS…SPEL, ALRV…QGLG, QLQS…ARCA, RLQS…LFRP, LLSE…AHLA, SLKT…ADCP, and KLKE…EKMV. The tract at residues 260 to 300 is disordered; the sequence is VGGRGGGKGKGRAEGSEKEESRRKRRERKQRREGGDGEEQD. A compositionally biased stretch (basic and acidic residues) spans 270 to 281; that stretch reads GRAEGSEKEESR. Residues Ser-315 and Ser-431 each carry the phosphoserine modification. Positions 402 to 437 form a coiled coil; that stretch reads LGRKEAKAKELVRQLQLEAEEQRKQKKRQSVSGLHR. The residue at position 509 (Tyr-509) is a Phosphotyrosine. Residues 513 to 544 are disordered; that stretch reads NKEEGSLSDTEADAVSGQLPDPTTNPSAGKDG. Residues Ser-518 and Ser-520 each carry the phosphoserine modification.

The chain is Leucine-rich repeat-containing protein 47 (LRRC47) from Homo sapiens (Human).